The following is an 883-amino-acid chain: DNA double-strand break repair Rad50 ATPase (883 aa).

ATP-binding positions include Lys-12, Asn-32–Ser-38, and Gln-137. Residues Glu-244 to Asp-283 adopt a coiled-coil conformation. Disordered stretches follow at residues Glu-271 to Asp-290 and Asp-305 to Val-326. Positions Ser-313 to Val-326 are enriched in basic and acidic residues. 2 coiled-coil regions span residues Ala-336–Leu-389 and Leu-414–Gly-452. One can recognise a Zinc-hook domain in the interval Phe-407–Ala-506. Positions 454 and 457 each coordinate Zn(2+). A disordered region spans residues Glu-508–Asp-565. 2 coiled-coil regions span residues Arg-571–Ala-604 and Lys-668–Leu-720.

The protein belongs to the SMC family. RAD50 subfamily. In terms of assembly, homodimer. Forms a heterotetramer composed of two Mre11 subunits and two Rad50 subunits. Zn(2+) is required as a cofactor.

Part of the Rad50/Mre11 complex, which is involved in the early steps of DNA double-strand break (DSB) repair. Rad50 controls the balance between DNA end bridging and DNA resection via ATP-dependent structural rearrangements of the Rad50/Mre11 complex. This is DNA double-strand break repair Rad50 ATPase from Halobacterium salinarum (strain ATCC 700922 / JCM 11081 / NRC-1) (Halobacterium halobium).